The chain runs to 134 residues: Arsenate reductase (134 aa).

Active-site nucleophile residues include Cys-11, Cys-83, and Cys-90. Disulfide bonds link Cys-11–Cys-83 and Cys-83–Cys-90.

It belongs to the low molecular weight phosphotyrosine protein phosphatase family. Thioredoxin-coupled ArsC subfamily.

The protein resides in the cytoplasm. It catalyses the reaction arsenate + [thioredoxin]-dithiol + H(+) = arsenite + [thioredoxin]-disulfide + H2O. Catalyzes the reduction of arsenate [As(V)] to arsenite [As(III)]. The chain is Arsenate reductase from Bacillus cereus (strain ZK / E33L).